The primary structure comprises 97 residues: Large ribosomal subunit protein bL28 (97 aa).

Belongs to the bacterial ribosomal protein bL28 family.

In Rickettsia akari (strain Hartford), this protein is Large ribosomal subunit protein bL28.